The following is a 259-amino-acid chain: Aliphatic sulfonates import ATP-binding protein SsuB 1 (259 aa).

Residues 15-229 (VECRRITRRF…QASTPGFQAL (215 aa)) enclose the ABC transporter domain. 47-54 (GSSGSGKT) provides a ligand contact to ATP.

It belongs to the ABC transporter superfamily. Aliphatic sulfonates importer (TC 3.A.1.17.2) family. The complex is composed of two ATP-binding proteins (SsuB), two transmembrane proteins (SsuC) and a solute-binding protein (SsuA).

It is found in the cell inner membrane. It catalyses the reaction ATP + H2O + aliphatic sulfonate-[sulfonate-binding protein]Side 1 = ADP + phosphate + aliphatic sulfonateSide 2 + [sulfonate-binding protein]Side 1.. Part of the ABC transporter complex SsuABC involved in aliphatic sulfonates import. Responsible for energy coupling to the transport system. The polypeptide is Aliphatic sulfonates import ATP-binding protein SsuB 1 (Pseudomonas fluorescens (strain ATCC BAA-477 / NRRL B-23932 / Pf-5)).